We begin with the raw amino-acid sequence, 412 residues long: Enhancer of translation termination 1 (412 aa).

Residues 1–45 (MAKRPLGLGKQSREKKRKVESVEKKSDEPSRESTPVRSQMSVELD) form a disordered region. The span at 17 to 31 (RKVESVEKKSDEPSR) shows a compositional bias: basic and acidic residues. Ser30 is modified (phosphoserine). Positions 32-41 (ESTPVRSQMS) are enriched in polar residues.

It belongs to the ETT1 family. In terms of assembly, interacts with STM1.

Its subcellular location is the nucleus. In terms of biological role, required for correct translation termination and probably involved in regulation of hypoxic gene expression in association TPA1. Inhibits replication of Brome mosaic virus. This is Enhancer of translation termination 1 (ETT1) from Saccharomyces cerevisiae (strain RM11-1a) (Baker's yeast).